The following is a 462-amino-acid chain: uncharacterized protein (462 aa).

Residues 12–70 (MLKKNDIIQVAISDLSHEGAGVAKHDGFVFFVDNALPEEVIDMRVLKVNKNSGFGKVEA) enclose the TRAM domain. S-adenosyl-L-methionine is bound by residues Gln-294, Tyr-323, Glu-344, and Asp-392. Cys-419 serves as the catalytic Nucleophile.

It belongs to the class I-like SAM-binding methyltransferase superfamily. RNA M5U methyltransferase family.

This is an uncharacterized protein from Streptococcus pyogenes serotype M1.